Reading from the N-terminus, the 326-residue chain is MALTADVKDELTKVEVSKTTVRAAELATILRFSGGLHLIGGRIAVESELDTPELARRVRKDLAELYGVRGVVSVISTSGVRRASQYLVRVLDGGETLARQTGLLDAHRRPIRGLPNRLTTGSREELAAVWRGAFLASGSLTDPGRSAALEVTCPGNEAAMALVGAAGRIGVAAKAREVRGVHRVVIRDGEAISAMLVQMGAAQTVSNWEELRQRREVRATANRLVNFDDANLRRSAQAAVAACARVERALEILGDDIPEHLQYAGRLRLAHRDASLDELGHYADPPMTKDAVAGRIRRLLAMADKRASDLGVPSTEASLPADFDEV.

The segment at residues 275-308 (SLDELGHYADPPMTKDAVAGRIRRLLAMADKRAS) is a DNA-binding region (H-T-H motif).

This sequence belongs to the WhiA family.

Involved in cell division and chromosome segregation. The polypeptide is Probable cell division protein WhiA (Leifsonia xyli subsp. xyli (strain CTCB07)).